Here is a 437-residue protein sequence, read N- to C-terminus: Adenylosuccinate lyase (437 aa).

Residues Arg-4 to Tyr-5, Lys-70 to Asp-72, and Thr-96 to Ser-97 each bind N(6)-(1,2-dicarboxyethyl)-AMP. The active-site Proton donor/acceptor is the His-144. Gln-215 serves as a coordination point for N(6)-(1,2-dicarboxyethyl)-AMP. Ser-265 serves as the catalytic Proton donor/acceptor. N(6)-(1,2-dicarboxyethyl)-AMP is bound by residues Ser-266, Lys-271 to Asn-273, and Ser-310 to Val-314.

Belongs to the lyase 1 family. Adenylosuccinate lyase subfamily. As to quaternary structure, homooligomer. Residues from neighboring subunits contribute catalytic and substrate-binding residues to each active site.

It carries out the reaction N(6)-(1,2-dicarboxyethyl)-AMP = fumarate + AMP. It catalyses the reaction (2S)-2-[5-amino-1-(5-phospho-beta-D-ribosyl)imidazole-4-carboxamido]succinate = 5-amino-1-(5-phospho-beta-D-ribosyl)imidazole-4-carboxamide + fumarate. It participates in purine metabolism; AMP biosynthesis via de novo pathway; AMP from IMP: step 2/2. Its pathway is purine metabolism; IMP biosynthesis via de novo pathway; 5-amino-1-(5-phospho-D-ribosyl)imidazole-4-carboxamide from 5-amino-1-(5-phospho-D-ribosyl)imidazole-4-carboxylate: step 2/2. Catalyzes two reactions in de novo purine nucleotide biosynthesis. Catalyzes the breakdown of 5-aminoimidazole- (N-succinylocarboxamide) ribotide (SAICAR or 2-[5-amino-1-(5-phospho-beta-D-ribosyl)imidazole-4-carboxamido]succinate) to 5-aminoimidazole-4-carboxamide ribotide (AICAR or 5-amino-1-(5-phospho-beta-D-ribosyl)imidazole-4-carboxamide) and fumarate, and of adenylosuccinate (ADS or N(6)-(1,2-dicarboxyethyl)-AMP) to adenosine monophosphate (AMP) and fumarate. The chain is Adenylosuccinate lyase (purB) from Aquifex aeolicus (strain VF5).